Here is a 313-residue protein sequence, read N- to C-terminus: Formimidoylglutamase (313 aa).

Positions 130, 155, 157, 159, 241, and 243 each coordinate Mn(2+).

Belongs to the arginase family. The cofactor is Mn(2+).

The catalysed reaction is N-formimidoyl-L-glutamate + H2O = formamide + L-glutamate. Its pathway is amino-acid degradation; L-histidine degradation into L-glutamate; L-glutamate from N-formimidoyl-L-glutamate (hydrolase route): step 1/1. Its function is as follows. Catalyzes the conversion of N-formimidoyl-L-glutamate to L-glutamate and formamide. The polypeptide is Formimidoylglutamase (Salmonella newport (strain SL254)).